The chain runs to 61 residues: ERMES regulator 1 (61 aa).

Topologically, residues 1-20 (MLPNLRRIFASFRTEEEERS) are mitochondrial intermembrane. A helical membrane pass occupies residues 21–43 (YSRKAFFHLIGYITCSVLFSWLV). The Cytoplasmic segment spans residues 44 to 61 (RKKVISSPVVSSPIHALS).

The protein belongs to the EMR1 family. In terms of assembly, interacts with the ER-mitochondria encounter structure (ERMES) complex. Interacts with mdm12. Interacts with mdm34.

It localises to the mitochondrion outer membrane. Its function is as follows. Mediates the formation of endoplasmic reticulum (ER)-mitochondria encounter structure (ERMES) foci, thereby contributing to the formation of ER-mitochondrial contact sites. This Schizosaccharomyces pombe (strain 972 / ATCC 24843) (Fission yeast) protein is ERMES regulator 1.